The following is a 476-amino-acid chain: Inosine-5'-monophosphate dehydrogenase (476 aa).

2 consecutive CBS domains span residues 92–150 and 151–207; these read MIEN…IADV and MTKD…PNAS. Residues Asp244 and 294-296 each bind NAD(+); that span reads GVG. Gly296 and Gly298 together coordinate K(+). Ser299 provides a ligand contact to IMP. Cys301 contacts K(+). Catalysis depends on Cys301, which acts as the Thioimidate intermediate. Residues 334 to 336, 357 to 358, 381 to 385, and Glu413 contribute to the IMP site; these read DGG, GS, and YRGMA. Glu467 and Ser468 together coordinate K(+).

It belongs to the IMPDH/GMPR family. In terms of assembly, homotetramer. It depends on K(+) as a cofactor.

The catalysed reaction is IMP + NAD(+) + H2O = XMP + NADH + H(+). It participates in purine metabolism; XMP biosynthesis via de novo pathway; XMP from IMP: step 1/1. Mycophenolic acid (MPA) is a non-competitive inhibitor that prevents formation of the closed enzyme conformation by binding to the same site as the amobile flap. In contrast, mizoribine monophosphate (MZP) is a competitive inhibitor that induces the closed conformation. MPA is a potent inhibitor of mammalian IMPDHs but a poor inhibitor of the bacterial enzymes. MZP is a more potent inhibitor of bacterial IMPDH. Catalyzes the conversion of inosine 5'-phosphate (IMP) to xanthosine 5'-phosphate (XMP), the first committed and rate-limiting step in the de novo synthesis of guanine nucleotides, and therefore plays an important role in the regulation of cell growth. The protein is Inosine-5'-monophosphate dehydrogenase of Nitrosopumilus maritimus (strain SCM1).